The following is a 60-amino-acid chain: Large ribosomal subunit protein bL32 (60 aa).

Residues 1-60 (MAVQQNKKSPSKRGMHRSHDALTNPPLAIEPTTGETHLRHHISPNGFYRGKKVIKTKNDD) are disordered. Basic residues predominate over residues 49 to 60 (RGKKVIKTKNDD).

It belongs to the bacterial ribosomal protein bL32 family.

The polypeptide is Large ribosomal subunit protein bL32 (Nitrosomonas eutropha (strain DSM 101675 / C91 / Nm57)).